A 337-amino-acid polypeptide reads, in one-letter code: Bifunctional methylenetetrahydrofolate dehydrogenase/cyclohydrolase, mitochondrial (337 aa).

The N-terminal 30 residues, 1–30 (MATALCPLRALGQTAFRPRTRRLHLSAPRA), are a transit peptide targeting the mitochondrion. Substrate contacts are provided by residues 79–83 (YVLNK) and 126–128 (VQL). NAD(+) is bound by residues 195-197 (GRS) and Arg-228. 304 to 308 (PGGVG) serves as a coordination point for substrate.

The protein belongs to the tetrahydrofolate dehydrogenase/cyclohydrolase family. Requires Mg(2+) as cofactor.

It localises to the mitochondrion. The enzyme catalyses (6R)-5,10-methylene-5,6,7,8-tetrahydrofolate + NAD(+) = (6R)-5,10-methenyltetrahydrofolate + NADH. The catalysed reaction is (6R)-5,10-methenyltetrahydrofolate + H2O = (6R)-10-formyltetrahydrofolate + H(+). In terms of biological role, although its dehydrogenase activity is NAD-specific, it can also utilize NADP at a reduced efficiency. The chain is Bifunctional methylenetetrahydrofolate dehydrogenase/cyclohydrolase, mitochondrial (MTHFD2) from Gallus gallus (Chicken).